Reading from the N-terminus, the 198-residue chain is Ion-translocating oxidoreductase complex subunit B (198 aa).

Residues 1-28 (MIITTVYFILVAIAVLALIFGAILGFAS) form a hydrophobic region. One can recognise a 4Fe-4S domain in the interval 34–92 (EADPIVEKIDALLPQSQCGQCGYPGCKPYAEAIANGDDITKCIPGGQTVIVNIAELMGV). [4Fe-4S] cluster is bound by residues Cys-51, Cys-54, Cys-59, Cys-75, Cys-115, Cys-118, Cys-121, Cys-125, Cys-145, Cys-148, Cys-151, and Cys-155. 2 consecutive 4Fe-4S ferredoxin-type domains span residues 106 to 135 (MVAFIDEDMCIGCTKCIQACPVDAIIGTNK) and 136 to 165 (AMHTIIPDLCTGCELCVPPCPTDCISMIKV).

Belongs to the 4Fe4S bacterial-type ferredoxin family. RnfB subfamily. The complex is composed of six subunits: RnfA, RnfB, RnfC, RnfD, RnfE and RnfG. The cofactor is [4Fe-4S] cluster.

It is found in the cell inner membrane. Functionally, part of a membrane-bound complex that couples electron transfer with translocation of ions across the membrane. The sequence is that of Ion-translocating oxidoreductase complex subunit B from Pasteurella multocida (strain Pm70).